The primary structure comprises 338 residues: mRNA decay activator protein ZFP36L1 (338 aa).

Residues 1 to 111 form a necessary and sufficient for the association with mRNA decay enzymes and mRNA decay activation region; sequence MTTTLVSATI…QKQPGGGQVN (111 aa). Ser54 is modified (phosphoserine; by MAPKAPK2). Ser90 carries the phosphoserine; by PKB/AKT1 modification. Ser92 carries the phosphoserine; by PKB/AKT1 and MAPKAPK2 modification. The tract at residues 93-113 is disordered; it reads EGGERLLPTQKQPGGGQVNSS. C3H1-type zinc fingers lie at residues 114 to 142 and 152 to 180; these read RYKTELCRPFEENGACKYGDKCQFAHGIH and KYKTELCRTFHTIGFCPYGPRCHFIHNAE. The tract at residues 185-338 is necessary for mRNA decay activation; it reads LAGARDLSAD…IFSRLSISDD (154 aa). A Phosphoserine; by PKB/AKT1 and MAPKAPK2 modification is found at Ser203. The tract at residues 273-338 is disordered; the sequence is SPTTFLFRPM…IFSRLSISDD (66 aa). Residues 296-318 are compositionally biased toward low complexity; sequence QDSLSDQEGYLSSSSSSHSGSDS. Ser318 is modified (phosphoserine). At Ser334 the chain carries Phosphoserine; by RPS6KA1.

Associates with the cytoplasmic CCR4-NOT deadenylase and RNA exosome complexes to trigger ARE-containing mRNA deadenylation and decay processes. Interacts with CNOT1. Interacts (via N-terminus) with CNOT6. Interacts with CNOT7; this interaction is inhibited in response to phorbol 12-myristate 13-acetate (PMA) treatment in a p38 MAPK-dependent manner. Interacts with DCP1A. Interacts (via N-terminus) with DCP2. Interacts (via N-terminus) with EXOSC2. Interacts with XRN1. Interacts (via phosphorylated form) with YWHAB; this interaction occurs in a protein kinase AKT1-dependent manner. Interacts (via phosphorylated form) with YWHAZ; this interaction occurs in a p38 MAPK- and AKT-signaling pathways. Post-translationally, phosphorylated. Phosphorylated by RPS6KA1 at Ser-334 upon phorbol 12-myristate 13-acetate (PMA) treatment; this phosphorylation results in dissociation of the CCR4-NOT deadenylase complex and induces p38 MAPK-mediated stabilization of the low-density lipoprotein receptor LDLR mRNA. Phosphorylated by protein kinase AKT1 at Ser-92 and Ser-203 in response to insulin; these phosphorylations stabilize ZFP36L1, increase the association with 14-3-3 proteins and mediate ARE-containing mRNA stabilization. AKT1-mediated phosphorylation at Ser-92 does not impair ARE-containing RNA-binding. Phosphorylated at Ser-54, Ser-92 and Ser-203 by MAPKAPK2; these phosphorylations increase the association with 14-3-3 proteins and mediate ARE-containing mRNA stabilization in a protein kinase AKT1-independent manner. MAPKAPK2-mediated phosphorylations at Ser-54, Ser-92 and Ser-203 do not impair ARE-containing RNA-binding. Phosphorylations increase the association with 14-3-3 proteins and mediate ARE-containing mRNA stabilization during early adipogenesis in a p38 MAPK- and AKT-dependent manner. Ubiquitinated. Ubiquitination leads to proteasomal degradation, a process inhibited by phosphorylations at Ser-90, Ser-92 and Ser-203. Expressed mainly in the basal epidermal layer, weakly in the suprabasal epidermal layers. Expressed in epidermal keratinocytes (at protein level). Expressed in osteoblasts.

It localises to the nucleus. Its subcellular location is the cytoplasm. The protein localises to the cytoplasmic granule. The protein resides in the P-body. In terms of biological role, zinc-finger RNA-binding protein that destabilizes several cytoplasmic AU-rich element (ARE)-containing mRNA transcripts by promoting their poly(A) tail removal or deadenylation, and hence provide a mechanism for attenuating protein synthesis. Acts as a 3'-untranslated region (UTR) ARE mRNA-binding adapter protein to communicate signaling events to the mRNA decay machinery. Functions by recruiting the CCR4-NOT deadenylase complex and components of the cytoplasmic RNA decay machinery to the bound ARE-containing mRNAs, and hence promotes ARE-mediated mRNA deadenylation and decay processes. Also induces the degradation of ARE-containing mRNAs even in absence of poly(A) tail. Binds to 3'-UTR ARE of numerous mRNAs. Positively regulates early adipogenesis by promoting ARE-mediated mRNA decay of immediate early genes (IEGs). Promotes ARE-mediated mRNA decay of mineralocorticoid receptor NR3C2 mRNA in response to hypertonic stress. Negatively regulates hematopoietic/erythroid cell differentiation by promoting ARE-mediated mRNA decay of the transcription factor STAT5B mRNA. Positively regulates monocyte/macrophage cell differentiation by promoting ARE-mediated mRNA decay of the cyclin-dependent kinase CDK6 mRNA. Promotes degradation of ARE-containing pluripotency-associated mRNAs in embryonic stem cells (ESCs), such as NANOG, through a fibroblast growth factor (FGF)-induced MAPK-dependent signaling pathway, and hence attenuates ESC self-renewal and positively regulates mesendoderm differentiation. May play a role in mediating pro-apoptotic effects in malignant B-cells by promoting ARE-mediated mRNA decay of BCL2 mRNA. In association with ZFP36L2 maintains quiescence on developing B lymphocytes by promoting ARE-mediated decay of several mRNAs encoding cell cycle regulators that help B cells progress through the cell cycle, and hence ensuring accurate variable-diversity-joining (VDJ) recombination and functional immune cell formation. Together with ZFP36L2 is also necessary for thymocyte development and prevention of T-cell acute lymphoblastic leukemia (T-ALL) transformation by promoting ARE-mediated mRNA decay of the oncogenic transcription factor NOTCH1 mRNA. Participates in the delivery of target ARE-mRNAs to processing bodies (PBs). In addition to its cytosolic mRNA-decay function, plays a role in the regulation of nuclear mRNA 3'-end processing; modulates mRNA 3'-end maturation efficiency of the DLL4 mRNA through binding with an ARE embedded in a weak noncanonical polyadenylation (poly(A)) signal in endothelial cells. Also involved in the regulation of stress granule (SG) and P-body (PB) formation and fusion. Plays a role in vasculogenesis and endocardial development. Plays a role in the regulation of keratinocyte proliferation, differentiation and apoptosis. Plays a role in myoblast cell differentiation. The polypeptide is mRNA decay activator protein ZFP36L1 (Homo sapiens (Human)).